Here is a 178-residue protein sequence, read N- to C-terminus: DNA-directed RNA polymerase V subunit 7 (178 aa).

Belongs to the eukaryotic RPB7/RPC8 RNA polymerase subunit family. Component of the RNA polymerase V complex.

It is found in the nucleus. DNA-dependent RNA polymerase catalyzes the transcription of DNA into RNA using the four ribonucleoside triphosphates as substrates. Component of RNA polymerase V involved in RNA-directed DNA methylation-dependent (RdDM) silencing of endogenous repeated sequences, including transposable elements. This chain is DNA-directed RNA polymerase V subunit 7 (NRPE7), found in Arabidopsis thaliana (Mouse-ear cress).